Here is a 471-residue protein sequence, read N- to C-terminus: MPGNQQKPESLETDSDTSPSCGLSDLSRGGSLESRCSSSRSRSFTMDDESLKHLTHEEKDVILFFEETLDSLEYDFDEPALCDSGIHCHSPQSLEESPSSHSEPEDVIDLVQPAPASGEAESLPDMPQVTGAPSDTKHGTPFLEGGKQAAENSLPPPDSRGPEVFPLPPSLPVPAPSAPRKELMSPSPPAEHPKLLRSVPTPLVIAQKISEKLAGNEALSPTSPSKEGRPGEWRTPTSPASRNGDHVGVWHRHTTQSAPKVHRFPSNISVTNSAGKDFNKTISKAAVNVQERKAQVLANINGMSFIAAGDTSSEERWQKAEEQRSGSADGARTLGRAGMAGEPGAPCAGVPARAQQSRAVQTEQPPALANGFQSVHEALRSEPSSFVPTSKTITFRPDPAVTGKLARQNASRSLYEPRPDGSQDARKRTGSLPRAVGFRPQGITVQFSGRGSTEEARREALRKLGLLKENL.

Disordered regions lie at residues 1–46 (MPGN…SFTM) and 82–247 (CDSG…GDHV). Residues 26 to 43 (LSRGGSLESRCSSSRSRS) are compositionally biased toward low complexity. The residue at position 43 (serine 43) is a Phosphoserine. Residue threonine 45 is modified to Phosphothreonine. Residues 90-101 (SPQSLEESPSSH) show a composition bias toward low complexity. Over residues 154–177 (LPPPDSRGPEVFPLPPSLPVPAPS) the composition is skewed to pro residues. A phosphoserine mark is found at serine 187, serine 220, and serine 223. Residue arginine 263 is modified to Asymmetric dimethylarginine; alternate. Arginine 263 bears the Omega-N-methylarginine; alternate mark. Disordered regions lie at residues 310–365 (DTSS…TEQP) and 383–437 (PSSF…RAVG). A compositionally biased stretch (basic and acidic residues) spans 313-324 (SEERWQKAEEQR). Polar residues-rich tracts occupy residues 354–364 (AQQSRAVQTEQ) and 383–393 (PSSFVPTSKTI). The span at 415-427 (YEPRPDGSQDARK) shows a compositional bias: basic and acidic residues. Serine 431 is subject to Phosphoserine. Arginine 450 is modified (omega-N-methylarginine).

The sequence is that of Proline and serine-rich protein 2 (Proser2) from Mus musculus (Mouse).